The following is a 132-amino-acid chain: Small ribosomal subunit protein uS9 (132 aa).

It belongs to the universal ribosomal protein uS9 family.

The polypeptide is Small ribosomal subunit protein uS9 (rpsI) (Mycoplasma pneumoniae (strain ATCC 29342 / M129 / Subtype 1) (Mycoplasmoides pneumoniae)).